Consider the following 176-residue polypeptide: Nucleoside triphosphate/diphosphate phosphatase (176 aa).

Arg23 acts as the Proton donor in catalysis. Asn87, Asp103, Asp105, Asp107, Asp120, and Glu123 together coordinate Mg(2+).

This sequence belongs to the Ntdp family. It depends on Mg(2+) as a cofactor.

It catalyses the reaction a ribonucleoside 5'-triphosphate + H2O = a ribonucleoside 5'-diphosphate + phosphate + H(+). The catalysed reaction is a ribonucleoside 5'-diphosphate + H2O = a ribonucleoside 5'-phosphate + phosphate + H(+). Functionally, has nucleoside phosphatase activity towards nucleoside triphosphates and nucleoside diphosphates. The chain is Nucleoside triphosphate/diphosphate phosphatase from Bacillus cytotoxicus (strain DSM 22905 / CIP 110041 / 391-98 / NVH 391-98).